A 102-amino-acid polypeptide reads, in one-letter code: Late embryogenesis abundant protein D-19 (102 aa).

The tract at residues methionine 1 to asparagine 102 is disordered. Over residues glutamate 48–lysine 58 the composition is skewed to basic and acidic residues.

The protein belongs to the small hydrophilic plant seed protein family.

Its function is as follows. LEA proteins are late embryonic proteins abundant in higher plant seed embryos. There are two subsets of LEA proteins (5a and 5b), the first ones are expressed when the cotyledon weight reach 80 mg and the second set are expressed above 100 mg. The function of those proteins is not known. This chain is Late embryogenesis abundant protein D-19, found in Gossypium hirsutum (Upland cotton).